We begin with the raw amino-acid sequence, 954 residues long: Patched domain-containing protein 3 (954 aa).

The span at 1 to 20 (MPWVEPKPRPGPEQKPKLTK) shows a compositional bias: basic and acidic residues. The tract at residues 1-103 (MPWVEPKPRP…APLPEEETPE (103 aa)) is disordered. A compositionally biased stretch (pro residues) spans 42–57 (QPPPGPLAPPKSPEPS). A compositionally biased stretch (acidic residues) spans 90 to 102 (ELDDAPLPEEETP). A helical transmembrane segment spans residues 139-159 (WIFLLAPLMLTAALGTGFLYL). 3 N-linked (GlcNAc...) asparagine glycosylation sites follow: Asn192, Asn275, and Asn279. 7 helical membrane-spanning segments follow: residues 297-317 (LTGF…QLLL), 383-403 (VIPV…TSCF), 423-443 (FLAV…FVII), 447-467 (SPFL…SAWH), 486-506 (AAVS…TGIM), 520-540 (GMTL…FMAL), and 603-623 (YFVV…CFHV). Positions 383–540 (VIPVFHLAYI…ITCFGAFMAL (158 aa)) constitute an SSD domain. Asn678, Asn692, and Asn737 each carry an N-linked (GlcNAc...) asparagine glycan. 5 consecutive transmembrane segments (helical) span residues 804 to 824 (VLVA…YPLC), 826 to 846 (LWVT…MAFW), 858 to 878 (LVIC…AFVS), 894 to 914 (LLGY…CVLA), and 927 to 947 (IMFL…PVFL).

This sequence belongs to the patched family. As to expression, expressed in germ cells of the testis (at protein level). Detected in blood lymph, colon, small intestine, ovary, testis, prostate, thymus and spleen with highest levels in testis.

The protein resides in the cell projection. It localises to the cilium. Its subcellular location is the flagellum membrane. It is found in the endoplasmic reticulum membrane. Its function is as follows. May play a role in sperm development or sperm function. However, does not appear to have an essential role in spermatogenesis or male fertility. This Homo sapiens (Human) protein is Patched domain-containing protein 3 (PTCHD3).